A 77-amino-acid chain; its full sequence is U8-lycotoxin-Ls1s (77 aa).

The signal sequence occupies residues 1–20 (MKLIIFTGLVLFAIVSLIEA). Residues 21 to 26 (QAENER) constitute a propeptide that is removed on maturation.

This sequence belongs to the neurotoxin 19 (CSTX) family. 08 (U8-Lctx) subfamily. Contains 4 disulfide bonds. Expressed by the venom gland.

The protein resides in the secreted. The sequence is that of U8-lycotoxin-Ls1s from Lycosa singoriensis (Wolf spider).